A 498-amino-acid polypeptide reads, in one-letter code: Putrescine N-hydroxylase (498 aa).

Residues F23, D43, K45, W50, H51, and Q62 each contribute to the FAD site. 2 residues coordinate NADP(+): Q62 and R104. V127 serves as a coordination point for FAD. The NADP(+) site is built by S207, R231, Y275, and L309. FAD-binding residues include N386, P397, and L399. A compositionally biased stretch (polar residues) spans 443 to 474; it reads LESNTHSAVTPSKTRQGLNPSAKSVQQPSIEP. A disordered region spans residues 443-498; the sequence is LESNTHSAVTPSKTRQGLNPSAKSVQQPSIEPQTALRIAPTGGNVSALMAPNKEAQ.

This sequence belongs to the lysine N(6)-hydroxylase/L-ornithine N(5)-oxygenase family. It depends on FAD as a cofactor.

The catalysed reaction is putrescine + NADPH + O2 = N-hydroxyputrescine + NADP(+) + H2O. It functions in the pathway siderophore biosynthesis. N-hydroxylating monooxygenase involved in the biosynthesis of the siderophore putrebactin. Catalyzes the N-hydroxylation of the aliphatic diamine putrescine into N-hydroxyputrescine (NHP). In Shewanella oneidensis (strain ATCC 700550 / JCM 31522 / CIP 106686 / LMG 19005 / NCIMB 14063 / MR-1), this protein is Putrescine N-hydroxylase.